The chain runs to 504 residues: Ent-kaurene oxidase-like 3 (504 aa).

Residues 3-23 (SLLAAGAGGIGVAAAAVGGFI) form a helical membrane-spanning segment. Cys-448 lines the heme pocket.

This sequence belongs to the cytochrome P450 family. Heme serves as cofactor. As to expression, expressed in leaf blades.

It localises to the membrane. Functionally, may hydroxylate diterpenes. This is Ent-kaurene oxidase-like 3 from Oryza sativa subsp. japonica (Rice).